The primary structure comprises 765 residues: NADPH oxidase 5 (765 aa).

The tract at residues 1-77 is N-terminal lobe of N-terminal regulatory EF domain; it reads MNTSGDPAQT…LFDSDRSGTI (77 aa). The segment at 1-161 is N-terminal regulatory EF domain; that stretch reads MNTSGDPAQT…SCLRESAISL (161 aa). Over 1 to 238 the chain is Cytoplasmic; sequence MNTSGDPAQT…RAYWHNHRSQ (238 aa). 2 consecutive EF-hand domains span residues 26–56 and 57–92; these read RWLR…ALHV and KESF…LIHG. Positions 42, 44, 49, 70, 72, 74, 76, 81, and 106 each coordinate Ca(2+). The C-terminal lobe of N-terminal regulatory EF domain stretch occupies residues 78 to 161; it reads TLQELQEALT…SCLRESAISL (84 aa). The EF-hand 3; atypical; contains an insert of 28 residues domain occupies 93–156; the sequence is SPMDKLKFLF…RTVLQSCLRE (64 aa). I107 carries the S-nitrosocysteine modification. The Ca(2+) site is built by D108, S138, S140, E145, D178, D180, N182, and E189. Positions 122 to 141 are disordered; sequence GAGAGPHWASSPLGTGSGSI. One can recognise an EF-hand 4 domain in the interval 165 to 200; it reads KLDQLTLALFESADADGNGAITFEELRDELQRFPGV. The chain crosses the membrane as a helical span at residues 239–259; sequence LFCLATYAGLHVLLFGLAASA. A246 carries the post-translational modification S-nitrosocysteine. Residues 260 to 266 lie on the Extracellular side of the membrane; sequence HRDLGAS. The chain crosses the membrane as a helical span at residues 267 to 289; the sequence is VMVAKGCGQCLNFDCSFIAVLML. The Cytoplasmic segment spans residues 290 to 317; sequence RRCLTWLRATWLAQVLPLDQNIQFHQLM. The 148-residue stretch at 293 to 440 folds into the Ferric oxidoreductase domain; it reads LTWLRATWLA…FLEKAIGLAV (148 aa). Residues 318-338 form a helical membrane-spanning segment; the sequence is GYVVVGLSLVHTVAHTVNFVL. Over 339-362 the chain is Extracellular; sequence QAQAEASPFQFWELLLTTRPGIGW. A helical transmembrane segment spans residues 363-383; the sequence is VHGSASPTGVALLLLLLLMFI. Over 384-394 the chain is Cytoplasmic; that stretch reads CSSSCIRRSGH. Residues 395-417 traverse the membrane as a helical segment; it reads FEVFYWTHLSYLLVWLLLIFHGP. 2 C-terminal catalytic dehydrogenase domain regions span residues 398–719 and 416–737; these read FYWT…GRPD and GPNF…KVQV. The Extracellular portion of the chain corresponds to 418–434; sequence NFWKWLLVPGILFFLEK. The chain crosses the membrane as a helical span at residues 435-455; that stretch reads AIGLAVSRMAAVCIMEVNLLP. In terms of domain architecture, FAD-binding FR-type spans 441 to 577; that stretch reads SRMAAVCIME…DGPYGTPTRR (137 aa). Residues 456 to 583 are Cytoplasmic-facing; sequence SKVTHLLIKR…PTRRIFASEH (128 aa). D475 bears the Phosphoserine; by CaMK2 mark. A Phosphothreonine; by PKC/PRKCA modification is found at H490. I494 carries the phosphothreonine; by CaMK2 and PKC/PRKCA modification. P498 carries the phosphoserine; by CaMK2 and PKC/PRKCA modification. D502 carries the post-translational modification Phosphoserine; by CaMK2. Y519 carries the S-nitrosocysteine modification. Residues 584-604 form a helical membrane-spanning segment; that stretch reads AVLIGAGIGITPFASILQSIM. At 605–765 the chain is on the extracellular side; it reads YRHQKRKHTC…FGFRFFQENF (161 aa). At D659 the chain carries Phosphoserine; by CaMK2. L694 carries the S-nitrosocysteine modification.

In terms of assembly, homooligomer. Requires FAD as cofactor. The cofactor is Mg(2+). In terms of processing, phosphorylation at Ser-475 by CaMK2 and at Ser-490, Thr-494 and Ser-498 by PKC/PRKCA positively regulates its catalytic activity. S-nitrosylation in response to nitric oxide inhibits its catalytic activity. As to expression, mainly expressed in pachytene spermatocytes of testis and in lymphocyte-rich areas of spleen and lymph nodes. Also detected in ovary, placenta, pancreas, cardiac fibroblasts. Expressed in B-cells and prostate malignant cells. Expressed in spleen. Expressed in endothelial cells, pulmonary artery smooth muscle cells and epithelial colorectal adenocarcinoma cells. In terms of tissue distribution, expressed in microvascular endothelial cells (at protein level). Expressed in testis. Expressed in endothelial cells and pulmonary artery smooth muscle cells. As to expression, expressed in pulmonary artery smooth muscle cells and epithelial colorectal adenocarcinoma cells. Expressed in endothelial cells and pulmonary artery smooth muscle cells. In terms of tissue distribution, expressed in microvascular endothelial cells (at protein level).

It localises to the endoplasmic reticulum. Its subcellular location is the cell membrane. It carries out the reaction NADPH + 2 O2 = 2 superoxide + NADP(+) + H(+). Its activity is regulated as follows. Activated by calcium which induces conformational changes and interaction between the N-terminal regulatory region and the C-terminal catalytic region. Inhibited by diphenylene iodonium. In terms of biological role, calcium-dependent NADPH oxidase that catalyzes the generation of superoxide from molecular oxygen utilizing NADPH as an electron donor. May play a role in cell growth and apoptosis. Calcium-dependent NADPH oxidase that catalyzes the generation of superoxide from molecular oxygen utilizing NADPH as an electron donor. Involved in endothelial generation of reactive oxygen species (ROS), proliferation and angiogenesis and contributes to endothelial response to thrombin. Regulates redox-dependent processes in lymphocytes and spermatozoa. Its function is as follows. Calcium-dependent NADPH oxidase that catalyzes the generation of superoxide from molecular oxygen utilizing NADPH as an electron donor. Functionally, this isoform lacks calcium-binding domains and was showed to present a NADPH oxidase activity in a calcium-independent manner. May be involved in endothelial generation of reactive oxygen species (ROS), proliferation and angiogenesis and contribute to endothelial response to thrombin. However another study showed an absence of oxidase activity. Subject to rapid degradation. In terms of biological role, lacks calcium-dependent NADPH oxidase activity. This chain is NADPH oxidase 5, found in Homo sapiens (Human).